The sequence spans 543 residues: MDISKDLICIGFEGTAEKTGVGIINSKGEVLFNKTIIYTPPVQGIHPREAADHHAETFVKLLKEALAVVPLEKIDLVSFSLGPGLGPSLRVTATTARALSLSINKPIIGVNHCISHVEIGKLKTDAVDPLTLYVSGGNTQVLAYTGKKYRVIGETLDIAIGNCLDQFARHCNMPHPGGVYVEKYAKNGNKFIKLPYTVKGMDISLSGLLTAAMKKYDSKERIEDVCHSLQETSFSMLTEITERALAHTNKAEVMLVGGVAANNRLKEMLNVMCAEQNVDFYVPEREFCGDNGAMIAWLGILQYLNGKRMDLNDTKPISNYRSDMVEVNWIPEENNENIKSRIIPEHLIGKGAEADISKGRYLEFESITKERVKKGYRILELDELIRMRRTVKEARFLTAIKELGIYAPSIFDIDKERKKITMSYIHGKIAKEKIEEGNLDFCEDLGKIIGKMHVGGIVHNDLTTSNFIVSDNTFVIDFGLGKYSDLVEDKAIDLIVLKKSIMSIHYDKFDLVWNKIVEGYKTYEMSESVLECMKEVEKRARYL.

The tract at residues 1–329 (MDISKDLICI…YRSDMVEVNW (329 aa)) is kae1. Residues H112, H116, and Y133 each contribute to the Fe cation site. Residues 133–137 (YVSGG), D165, G178, E182, and N262 each bind L-threonylcarbamoyladenylate. A Fe cation-binding site is contributed by D290. Residues 342-543 (IIPEHLIGKG…KEVEKRARYL (202 aa)) enclose the Protein kinase domain. Residues 348–356 (IGKGAEADI) and K369 each bind ATP. The Proton acceptor; for kinase activity role is filled by D461.

It in the N-terminal section; belongs to the KAE1 / TsaD family. In the C-terminal section; belongs to the protein kinase superfamily. Tyr protein kinase family. BUD32 subfamily. In terms of assembly, component of the KEOPS complex that consists of Kae1, Bud32, Cgi121 and Pcc1; the whole complex dimerizes. Requires Fe(2+) as cofactor.

Its subcellular location is the cytoplasm. The enzyme catalyses L-seryl-[protein] + ATP = O-phospho-L-seryl-[protein] + ADP + H(+). It carries out the reaction L-threonyl-[protein] + ATP = O-phospho-L-threonyl-[protein] + ADP + H(+). It catalyses the reaction L-threonylcarbamoyladenylate + adenosine(37) in tRNA = N(6)-L-threonylcarbamoyladenosine(37) in tRNA + AMP + H(+). In terms of biological role, required for the formation of a threonylcarbamoyl group on adenosine at position 37 (t(6)A37) in tRNAs that read codons beginning with adenine. Is a component of the KEOPS complex that is probably involved in the transfer of the threonylcarbamoyl moiety of threonylcarbamoyl-AMP (TC-AMP) to the N6 group of A37. The Kae1 domain likely plays a direct catalytic role in this reaction. The Bud32 domain probably displays kinase activity that regulates Kae1 function. The protein is Probable bifunctional tRNA threonylcarbamoyladenosine biosynthesis protein of Methanococcus maripaludis (strain C6 / ATCC BAA-1332).